Here is a 94-residue protein sequence, read N- to C-terminus: CRISPR-associated endoribonuclease Cas2 (94 aa).

Position 11 (D11) interacts with Mg(2+).

The protein belongs to the CRISPR-associated endoribonuclease Cas2 protein family. In terms of assembly, homodimer, forms a heterotetramer with a Cas1 homodimer. The cofactor is Mg(2+).

In terms of biological role, CRISPR (clustered regularly interspaced short palindromic repeat), is an adaptive immune system that provides protection against mobile genetic elements (viruses, transposable elements and conjugative plasmids). CRISPR clusters contain sequences complementary to antecedent mobile elements and target invading nucleic acids. CRISPR clusters are transcribed and processed into CRISPR RNA (crRNA). Functions as a ssRNA-specific endoribonuclease. Involved in the integration of spacer DNA into the CRISPR cassette. The polypeptide is CRISPR-associated endoribonuclease Cas2 (Allochromatium vinosum (strain ATCC 17899 / DSM 180 / NBRC 103801 / NCIMB 10441 / D) (Chromatium vinosum)).